The chain runs to 93 residues: Small ribosomal subunit protein uS19 (93 aa).

Belongs to the universal ribosomal protein uS19 family.

Its function is as follows. Protein S19 forms a complex with S13 that binds strongly to the 16S ribosomal RNA. This is Small ribosomal subunit protein uS19 from Agathobacter rectalis (strain ATCC 33656 / DSM 3377 / JCM 17463 / KCTC 5835 / VPI 0990) (Eubacterium rectale).